A 423-amino-acid chain; its full sequence is Polyglutamylase complex subunit TTLL1 (423 aa).

A TTL domain is found at 1-367; that stretch reads MAGKVKWVTD…NGEIPDCKWN (367 aa). ATP is bound by residues Lys138, 144 to 145, 181 to 184, and 194 to 196; these read QG, SLYI, and KFD. Gln144 provides a ligand contact to a protein. An L-glutamate-binding site is contributed by Arg220. 241 to 242 provides a ligand contact to ATP; it reads TN. Lys259 serves as a coordination point for L-glutamate. Mg(2+) contacts are provided by Asp313, Glu326, and Asn328. L-glutamate is bound at residue Lys344. The disordered stretch occupies residues 391–423; the sequence is GAERELRSRPGQSLGPKGSRLRDAGRTVLTTWK.

Belongs to the tubulin polyglutamylase family. Part of the neuronal tubulin polyglutamylase complex which contains TPGS1, TPGS2, TTLL1, LRRC49 and NICN1. Interacts with PCM1, CSTPP1 and LRRC49. The cofactor is Mg(2+).

The protein localises to the cytoplasm. Its subcellular location is the cytoskeleton. The protein resides in the cilium basal body. It is found in the cilium axoneme. It localises to the cell projection. The protein localises to the cilium. Its subcellular location is the flagellum. It carries out the reaction (L-glutamyl)(n)-gamma-L-glutamyl-L-glutamyl-[protein] + L-glutamate + ATP = (L-glutamyl)(n+1)-gamma-L-glutamyl-L-glutamyl-[protein] + ADP + phosphate + H(+). Its function is as follows. Catalytic subunit of a polyglutamylase complex which modifies tubulin, generating side chains of glutamate on the gamma-carboxyl group of specific glutamate residues within the C-terminal tail of tubulin. Probably involved in the side-chain elongation step of the polyglutamylation reaction rather than the initiation step. Modifies both alpha- and beta-tubulins with a preference for the alpha-tail. Unlike most polyglutamylases of the tubulin--tyrosine ligase family, only displays a catalytic activity when in complex with other proteins as it is most likely lacking domains important for autonomous activity. Part of the neuronal tubulin polyglutamylase complex. Mediates cilia and flagella polyglutamylation which is essential for their biogenesis and motility. Involved in respiratory motile cilia function through the regulation of beating asymmetry. Essential for sperm flagella biogenesis, motility and male fertility. Involved in KLF4 glutamylation which impedes its ubiquitination, thereby leading to somatic cell reprogramming, pluripotency maintenance and embryogenesis. This Bos taurus (Bovine) protein is Polyglutamylase complex subunit TTLL1 (TTLL1).